A 209-amino-acid chain; its full sequence is Large ribosomal subunit protein uL3 (209 aa).

The disordered stretch occupies residues 141-163 (RAVGSMGASSDPSRTFKNKRMPG).

This sequence belongs to the universal ribosomal protein uL3 family. In terms of assembly, part of the 50S ribosomal subunit. Forms a cluster with proteins L14 and L19.

Its function is as follows. One of the primary rRNA binding proteins, it binds directly near the 3'-end of the 23S rRNA, where it nucleates assembly of the 50S subunit. In Clostridium botulinum (strain ATCC 19397 / Type A), this protein is Large ribosomal subunit protein uL3.